A 274-amino-acid chain; its full sequence is NAD(P)H dehydrogenase [quinone] 1 (274 aa).

FAD is bound by residues histidine 12, 18 to 19 (FN), and glutamine 67. Position 82 is a phosphoserine (serine 82). An FAD-binding site is contributed by 104–107 (LQWF). 126–128 (AYT) lines the substrate pocket. FAD is bound by residues 148–151 (TTGG), tyrosine 156, and arginine 201. Residues 225-274 (PSSLFDLNFQAGFLMKKEVQDEEKNKKFGLSVGHHLGKSIPTDNQIKARK) are important for apoenzyme conformational stability. Residues lysine 250 and lysine 251 each participate in a glycyl lysine isopeptide (Lys-Gly) (interchain with G-Cter in SUMO2) cross-link.

The protein belongs to the NAD(P)H dehydrogenase (quinone) family. In terms of assembly, homodimer. Interacts with PDLIM4 isoform 2; this interaction stabilizes PDLIM4 isoform 2 in response to oxidative stress and protects it from ubiquitin-independent degradation by the core 20S proteasome. Interacts with TP73 (via SAM domain); this interaction is NADH-dependent, stabilizes TP73 in response to oxidative stress and protects it from ubiquitin-independent degradation by the 20S proteasome. Interacts with TP53; this interaction is NADH-dependent, stabilizes TP53 in response to oxidative stress and protects it from ubiquitin-independent degradation by the 20S proteasome. Requires FAD as cofactor.

It is found in the cytoplasm. It localises to the cytosol. The catalysed reaction is a quinone + NADH + H(+) = a quinol + NAD(+). The enzyme catalyses a quinone + NADPH + H(+) = a quinol + NADP(+). It catalyses the reaction ubiquinone-10 + NADH + H(+) = ubiquinol-10 + NAD(+). It carries out the reaction menadione + NADH + H(+) = menadiol + NAD(+). Flavin-containing quinone reductase that catalyzes two-electron reduction of quinones to hydroquinones using either NADH or NADPH as electron donors. In a ping-pong kinetic mechanism, the electrons are sequentially transferred from NAD(P)H to flavin cofactor and then from reduced flavin to the quinone, bypassing the formation of semiquinone and reactive oxygen species. Regulates cellular redox state primarily through quinone detoxification. Reduces components of plasma membrane redox system such as coenzyme Q and vitamin quinones, producing antioxidant hydroquinone forms. In the process may function as superoxide scavenger to prevent hydroquinone oxidation and facilitate excretion. Alternatively, can activate quinones and their derivatives by generating redox reactive hydroquinones with DNA cross-linking antitumor potential. Acts as a gatekeeper of the core 20S proteasome known to degrade proteins with unstructured regions. Upon oxidative stress, interacts with tumor suppressors TP53 and TP73 in a NADH-dependent way and inhibits their ubiquitin-independent degradation by the 20S proteasome. The chain is NAD(P)H dehydrogenase [quinone] 1 (NQO1) from Pongo abelii (Sumatran orangutan).